Consider the following 302-residue polypeptide: N-acetylmuramic acid 6-phosphate etherase (302 aa).

Positions 57 to 220 (VSEKLKNNGR…TTAVMIKLGK (164 aa)) constitute an SIS domain. Glu-85 functions as the Proton donor in the catalytic mechanism. Glu-116 is a catalytic residue.

Belongs to the GCKR-like family. MurNAc-6-P etherase subfamily. As to quaternary structure, homodimer.

The catalysed reaction is N-acetyl-D-muramate 6-phosphate + H2O = N-acetyl-D-glucosamine 6-phosphate + (R)-lactate. It functions in the pathway amino-sugar metabolism; N-acetylmuramate degradation. In terms of biological role, specifically catalyzes the cleavage of the D-lactyl ether substituent of MurNAc 6-phosphate, producing GlcNAc 6-phosphate and D-lactate. The sequence is that of N-acetylmuramic acid 6-phosphate etherase from Clostridium acetobutylicum (strain ATCC 824 / DSM 792 / JCM 1419 / IAM 19013 / LMG 5710 / NBRC 13948 / NRRL B-527 / VKM B-1787 / 2291 / W).